The primary structure comprises 455 residues: Regulatory protein LuxO (455 aa).

One can recognise a Response regulatory domain in the interval 1 to 112 (MVEDTASVAA…RLRVTVNNAI (112 aa)). A 4-aspartylphosphate modification is found at D47. In terms of domain architecture, Sigma-54 factor interaction spans 132-361 (FIGSSQTMQA…LQNVLRNVVV (230 aa)). ATP contacts are provided by residues 160–167 (GESGTGKE) and 223–232 (ADGGTLFLDE).

Functionally, involved in the regulation of different processes depending on the cell density. Acts together with sigma-54 to repress, perhaps indirectly, some genes. This chain is Regulatory protein LuxO (luxO), found in Vibrio cholerae serotype O1 (strain ATCC 39315 / El Tor Inaba N16961).